The primary structure comprises 430 residues: Asparagine--tRNA ligase (430 aa).

This sequence belongs to the class-II aminoacyl-tRNA synthetase family. In terms of assembly, homodimer.

The protein resides in the cytoplasm. The enzyme catalyses tRNA(Asn) + L-asparagine + ATP = L-asparaginyl-tRNA(Asn) + AMP + diphosphate + H(+). The protein is Asparagine--tRNA ligase of Listeria monocytogenes serotype 4b (strain F2365).